The primary structure comprises 145 residues: D-aminoacyl-tRNA deacylase (145 aa).

The short motif at 137–138 (GP) is the Gly-cisPro motif, important for rejection of L-amino acids element.

This sequence belongs to the DTD family. Homodimer.

The protein localises to the cytoplasm. The enzyme catalyses glycyl-tRNA(Ala) + H2O = tRNA(Ala) + glycine + H(+). It catalyses the reaction a D-aminoacyl-tRNA + H2O = a tRNA + a D-alpha-amino acid + H(+). In terms of biological role, an aminoacyl-tRNA editing enzyme that deacylates mischarged D-aminoacyl-tRNAs. Also deacylates mischarged glycyl-tRNA(Ala), protecting cells against glycine mischarging by AlaRS. Acts via tRNA-based rather than protein-based catalysis; rejects L-amino acids rather than detecting D-amino acids in the active site. By recycling D-aminoacyl-tRNA to D-amino acids and free tRNA molecules, this enzyme counteracts the toxicity associated with the formation of D-aminoacyl-tRNA entities in vivo and helps enforce protein L-homochirality. The polypeptide is D-aminoacyl-tRNA deacylase (Lactobacillus delbrueckii subsp. bulgaricus (strain ATCC 11842 / DSM 20081 / BCRC 10696 / JCM 1002 / NBRC 13953 / NCIMB 11778 / NCTC 12712 / WDCM 00102 / Lb 14)).